The sequence spans 287 residues: Phycobilisome 32.1 kDa linker polypeptide, phycocyanin-associated, rod (287 aa).

One can recognise a PBS-linker domain in the interval 2–180; the sequence is AITAAASRLG…LYRGYANSDR (179 aa). The region spanning 235–287 is the CpcD-like domain; that stretch reads GRVYRIEVAGIRQPGYPGVRRSSTAFLVPYEQLSAKMQQLQRTGARIISVNPA.

Belongs to the phycobilisome linker protein family.

The protein localises to the cellular thylakoid membrane. In terms of biological role, rod linker protein, associated with phycocyanin. Linker polypeptides determine the state of aggregation and the location of the disk-shaped phycobiliprotein units within the phycobilisome and modulate their spectroscopic properties in order to mediate a directed and optimal energy transfer. The chain is Phycobilisome 32.1 kDa linker polypeptide, phycocyanin-associated, rod (cpcC) from Thermosynechococcus vestitus (strain NIES-2133 / IAM M-273 / BP-1).